A 210-amino-acid polypeptide reads, in one-letter code: Large ribosomal subunit protein uL3 (210 aa).

The protein belongs to the universal ribosomal protein uL3 family. As to quaternary structure, part of the 50S ribosomal subunit. Forms a cluster with proteins L14 and L19.

In terms of biological role, one of the primary rRNA binding proteins, it binds directly near the 3'-end of the 23S rRNA, where it nucleates assembly of the 50S subunit. The sequence is that of Large ribosomal subunit protein uL3 from Syntrophotalea carbinolica (strain DSM 2380 / NBRC 103641 / GraBd1) (Pelobacter carbinolicus).